The following is a 204-amino-acid chain: Casparian strip membrane protein 2 (204 aa).

The Cytoplasmic segment spans residues 1–41; it reads MKNESTFIDVPADSSSAMKGKAPLIGVAKDHTASGSGGYNR. Residues 42-62 form a helical membrane-spanning segment; that stretch reads GLSIFDFLLRLAAIVAASVAA. Topologically, residues 63-92 are extracellular; the sequence is GTMFTSDETLPFFTQFLQFEAGYDDLPTFQ. A helical transmembrane segment spans residues 93-113; it reads FFVIAMSLVSGYIVLSLPISV. Topologically, residues 114–125 are cytoplasmic; the sequence is VTIVRPLAAAPR. The chain crosses the membrane as a helical span at residues 126 to 146; that stretch reads LLLLVLDTAVMGLTMAAASSA. The Extracellular segment spans residues 147 to 178; sequence AAISYVAHNGNQNTNWLPICQQFFDFCQKTSG. The chain crosses the membrane as a helical span at residues 179 to 199; that stretch reads AVVSSFVAVVFFMILVVLSGV. Residues 200–204 lie on the Cytoplasmic side of the membrane; the sequence is ALERH.

This sequence belongs to the Casparian strip membrane proteins (CASP) family. As to quaternary structure, homodimer and heterodimers.

The protein resides in the cell membrane. Regulates membrane-cell wall junctions and localized cell wall deposition. Required for establishment of the Casparian strip membrane domain (CSD) and the subsequent formation of Casparian strips, a cell wall modification of the root endodermis that determines an apoplastic barrier between the intraorganismal apoplasm and the extraorganismal apoplasm and prevents lateral diffusion. In Raphanus sativus (Radish), this protein is Casparian strip membrane protein 2.